Reading from the N-terminus, the 518-residue chain is Histone deacetylase 1 (518 aa).

Residues R22 to G333 form a histone deacetylase region. The active-site Proton donor/acceptor is the H153. Residues D188, H190, and D276 each coordinate Zn(2+). Residues H387 to T518 form a disordered region. Positions E401–P412 are enriched in acidic residues. Positions D413 to R435 are enriched in basic and acidic residues. Residues D503–T518 are compositionally biased toward polar residues.

Belongs to the histone deacetylase family. HD Type 1 subfamily. As to quaternary structure, interacts with TPR3. Requires Zn(2+) as cofactor. As to expression, expressed in roots and leaves.

The protein localises to the nucleus. It catalyses the reaction N(6)-acetyl-L-lysyl-[histone] + H2O = L-lysyl-[histone] + acetate. Responsible for the deacetylation of lysine residues on the N-terminal part of the core histones (H2A, H2B, H3 and H4). Histone deacetylation gives a tag for epigenetic repression and plays an important role in transcriptional regulation, cell cycle progression and developmental events. Histone deacetylases act via the formation of large multiprotein complexes. Negatively regulates the expression of the NAC48/NAC6 gene that controls root growth in seedlings. Epigenetically represses the expression of NAC48/NAC6 by deacetylating 'Lys-9' (H3K9ac), 'Lys-14' (H3K14ac) and 'Lys-18' (H3K18ac) of histone H3, and 'Lys-5' (H4K5ac), 'Lys-12' (H4K12ac) and 'Lys-16' (H4K16ac) of histone H4. Functions in the regulation of gene expression in the whole genome. Acts as a chromatin remodeling regulator to promote the formation of a repressive chromatin state. Functions with MODD via its interaction with TPR3, to down-regulates the histone acetylation level at BZIP46 target genes. BZIP46 is a positive regulator of abscisic acid (ABA) signaling and drought stress tolerance. The chain is Histone deacetylase 1 from Oryza sativa subsp. japonica (Rice).